We begin with the raw amino-acid sequence, 48 residues long: Glycine-rich RNA-binding protein 3 (48 aa).

The chain is Glycine-rich RNA-binding protein 3 from Populus euphratica (Euphrates poplar).